A 113-amino-acid polypeptide reads, in one-letter code: MNTLDFVDQASLREDVPDFRPGDTINVHVKVIEGSKERIQVFKGVVLRRSGGGVSATFTVRKESYGVGVERTFPVHSPNIDHIEILTRGAVRRAKLYYLRELRGKKAKIKEKR.

The protein belongs to the bacterial ribosomal protein bL19 family.

This protein is located at the 30S-50S ribosomal subunit interface and may play a role in the structure and function of the aminoacyl-tRNA binding site. The sequence is that of Large ribosomal subunit protein bL19 from Mycobacteroides abscessus (strain ATCC 19977 / DSM 44196 / CCUG 20993 / CIP 104536 / JCM 13569 / NCTC 13031 / TMC 1543 / L948) (Mycobacterium abscessus).